Consider the following 411-residue polypeptide: Peptidyl-prolyl cis-trans isomerase (411 aa).

At serine 2 the chain carries N-acetylserine. Disordered stretches follow at residues 54–127 and 160–302; these read IIKR…TLSP and NYVK…PKSK. Residues 61-87 are compositionally biased toward acidic residues; it reads FEDDDFLGGDFDEDEIDEESSEEEEEE. Phosphoserine is present on residues serine 80 and serine 81. At threonine 89 the chain carries Phosphothreonine. 2 stretches are compositionally biased toward acidic residues: residues 103 to 118 and 173 to 242; these read ESED…DEFQ and EGED…EEQK. The residue at position 184 (tyrosine 184) is a Phosphotyrosine; by CK2. Serine 186 carries the post-translational modification Phosphoserine; by CK2. Basic residues predominate over residues 251 to 260; it reads KSKKEKKRKH. A Nuclear localization signal motif is present at residues 256–271; that stretch reads KKRKHEEKEEEKKAKK. A compositionally biased stretch (basic and acidic residues) spans 261 to 296; it reads EEKEEEKKAKKVKKVEFKKDLEEGPTKPKSKKEQDK. The PPIase FKBP-type domain maps to 324 to 411; it reads GARVGMRYIG…FDVKLVSMKN (88 aa).

It belongs to the FKBP-type PPIase family. FKBP3/4 subfamily. Interacts with NOP53. In terms of processing, phosphorylated at tyrosine and dephosphorylated by the phosphotyrosine-specific phosphoprotein phosphatase PTP1.

It is found in the nucleus. The protein localises to the nucleolus. It catalyses the reaction [protein]-peptidylproline (omega=180) = [protein]-peptidylproline (omega=0). With respect to regulation, inhibited by both FK506 and rapamycin. Its function is as follows. Proline isomerase that belongs to an abundant class of enzymes that catalyze the cis-trans isomerization of X-Pro peptide bonds and can accelerate the refolding of proline-containing polypeptides. Specifically binds nuclear localization sequences. May be involved in the assembly or folding of ribosomal proteins. The chain is Peptidyl-prolyl cis-trans isomerase from Saccharomyces cerevisiae (strain ATCC 204508 / S288c) (Baker's yeast).